Reading from the N-terminus, the 179-residue chain is Sperm surface protein Sp17 (179 aa).

The span at 72–109 shows a compositional bias: basic and acidic residues; it reads HAFKDEPPEKSETQKIQPEKVAIEKETMPQETVKEKET. Disordered regions lie at residues 72-138 and 159-179; these read HAFK…EGLL and TRKE…ENNE. Residues 116 to 135 are compositionally biased toward acidic residues; that stretch reads EPTEEPQKEEEEEEDEEDLE. Residues 143-172 enclose the IQ domain; the sequence is MQDAAVKIQAVFRGHKTRKEYLKKRDSTDE. A compositionally biased stretch (basic and acidic residues) spans 161–170; it reads KEYLKKRDST.

In terms of assembly, homodimer. May interact with ROPN1. In terms of tissue distribution, testis- and sperm-specific.

It is found in the membrane. Sperm surface zona pellucida binding protein. Helps to bind spermatozoa to the zona pellucida with high affinity. Might function in binding zona pellucida and carbohydrates. The sequence is that of Sperm surface protein Sp17 (SPA17) from Monodelphis domestica (Gray short-tailed opossum).